The chain runs to 134 residues: MAEKIKLEIVTPEKKVLSEMVDIVVAPGQEGEFGVLPHHIPFLSKLKVGELRYRIGQTLRCVAIMGGYAEVLPDQVTILAPAAEEAGEIDVIRAKAARERAERRLAETKDRLEFTRAQAALQRAVARLKVAEKT.

It belongs to the ATPase epsilon chain family. F-type ATPases have 2 components, CF(1) - the catalytic core - and CF(0) - the membrane proton channel. CF(1) has five subunits: alpha(3), beta(3), gamma(1), delta(1), epsilon(1). CF(0) has three main subunits: a, b and c.

It localises to the cell inner membrane. Its function is as follows. Produces ATP from ADP in the presence of a proton gradient across the membrane. The sequence is that of ATP synthase epsilon chain from Syntrophobacter fumaroxidans (strain DSM 10017 / MPOB).